A 403-amino-acid polypeptide reads, in one-letter code: Calcium-responsive transactivator (403 aa).

The segment at 1-148 is N-terminal auto-inhibitory domain; the sequence is MSVAFASARP…TLPTTTMSMA (148 aa). The SH2-binding signature appears at 50-53; that stretch reads YQQI. Disordered stretches follow at residues 72–111, 152–171, 224–303, and 318–403; these read QSLLPAPPTQNMNLGPGGMSQTGPSQTLHSQGNLSEALGS, HGSAPGYSHTVPSSQNVPMQ, NQSS…RTFE, and SQQQ…NYQQ. 2 stretches are compositionally biased toward polar residues: residues 92-105 and 161-171; these read QTGPSQTLHSQGNL and TVPSSQNVPMQ. A methionine-rich intra-molecular domain region spans residues 149-238; that stretch reads VSTHGSAPGY…GSSMMGQRPL (90 aa). Positions 224–235 are enriched in low complexity; that stretch reads NQSSQGSSMMGQ. Residues 252–324 form an MFD domain region; the sequence is YLGQEEYYSE…AQYSQQQTGY (73 aa). The segment covering 263–277 has biased composition (polar residues); it reads YGHSQGSSEAMTPQY. Low complexity predominate over residues 286–296; it reads YSYQQSSYGEQ. A necessary for nuclear localization region spans residues 341-403; sequence NQQNYPGQQQ…EQGQYGNYQQ (63 aa). Positions 360 to 363 match the SH2-binding motif; sequence SQYS. The SH3-binding signature appears at 378-386; sequence TSQTTSTAQ. Positions 398–401 match the SH2-binding motif; sequence YGNY.

This sequence belongs to the SS18 family. As to quaternary structure, homodimer.

The protein localises to the nucleus. Its function is as follows. Transcriptional activator which may be required for calcium-dependent dendritic growth and branching in cortical neurons. The protein is Calcium-responsive transactivator (ss18l1) of Xenopus laevis (African clawed frog).